Consider the following 122-residue polypeptide: Prefoldin subunit 1 (122 aa).

An N-acetylalanine modification is found at A2.

Belongs to the prefoldin subunit beta family. As to quaternary structure, heterohexamer of two PFD-alpha type and four PFD-beta type subunits.

Binds specifically to cytosolic chaperonin (c-CPN) and transfers target proteins to it. Binds to nascent polypeptide chain and promotes folding in an environment in which there are many competing pathways for nonnative proteins. This is Prefoldin subunit 1 (Pfdn1) from Mus musculus (Mouse).